Here is a 174-residue protein sequence, read N- to C-terminus: Mating-type protein ALPHA2 (174 aa).

Residues 108–170 (QPYRGHRFTK…NRRRKQKHPP (63 aa)) constitute a DNA-binding region (homeobox; TALE-type).

Belongs to the TALE/M-ATYP homeobox family. In terms of assembly, forms a heterodimer with A1.

Its subcellular location is the nucleus. Its function is as follows. Mating type proteins are sequence specific DNA-binding proteins that act as master switches in yeast differentiation by controlling gene expression in a cell type-specific fashion. Transcriptional corepressor that acts in conjunction with A1 to repress transcription of haploid-specific genes and of MATALPHA1. The polypeptide is Mating-type protein ALPHA2 (MATALPHA2) (Nakaseomyces delphensis (Yeast)).